We begin with the raw amino-acid sequence, 201 residues long: Mediator of RNA polymerase II transcription subunit 22 (201 aa).

Positions 93–123 (SVNEAIDQRNQQLRALQEECDRKLIALRDEV) form a coiled coil. A disordered region spans residues 166–201 (LSAPLLASPEPSAGGPLQAAAPTHSHAGGPGPTEHA).

Component of the Mediator complex, which is composed of MED1, MED4, MED6, MED7, MED8, MED9, MED10, MED11, MED12, MED13, MED13L, MED14, MED15, MED16, MED17, MED18, MED19, MED20, MED21, MED22, MED23, MED24, MED25, MED26, MED27, MED29, MED30, MED31, CCNC, CDK8 and CDC2L6/CDK11. The MED12, MED13, CCNC and CDK8 subunits form a distinct module termed the CDK8 module. Mediator containing the CDK8 module is less active than Mediator lacking this module in supporting transcriptional activation. Individual preparations of the Mediator complex lacking one or more distinct subunits have been variously termed ARC, CRSP, DRIP, PC2, SMCC and TRAP.

It localises to the nucleus. Functionally, component of the Mediator complex, a coactivator involved in the regulated transcription of nearly all RNA polymerase II-dependent genes. Mediator functions as a bridge to convey information from gene-specific regulatory proteins to the basal RNA polymerase II transcription machinery. Mediator is recruited to promoters by direct interactions with regulatory proteins and serves as a scaffold for the assembly of a functional preinitiation complex with RNA polymerase II and the general transcription factors. This Bos taurus (Bovine) protein is Mediator of RNA polymerase II transcription subunit 22 (MED22).